Here is a 211-residue protein sequence, read N- to C-terminus: Large ribosomal subunit protein eL13 (211 aa).

K16 bears the N6-acetyllysine mark. Phosphoserine is present on residues S52, S77, and S106. Glycyl lysine isopeptide (Lys-Gly) (interchain with G-Cter in SUMO2) cross-links involve residues K123 and K145. A Glycyl lysine isopeptide (Lys-Gly) (interchain with G-Cter in SUMO1); alternate cross-link involves residue K174. Residues K174 and K177 each participate in a glycyl lysine isopeptide (Lys-Gly) (interchain with G-Cter in SUMO2); alternate cross-link. K177 bears the N6-acetyllysine; alternate mark.

Belongs to the eukaryotic ribosomal protein eL13 family. As to quaternary structure, component of the 60S large ribosomal subunit (LSU).

It localises to the cytoplasm. Component of the ribosome, a large ribonucleoprotein complex responsible for the synthesis of proteins in the cell. The small ribosomal subunit (SSU) binds messenger RNAs (mRNAs) and translates the encoded message by selecting cognate aminoacyl-transfer RNA (tRNA) molecules. The large subunit (LSU) contains the ribosomal catalytic site termed the peptidyl transferase center (PTC), which catalyzes the formation of peptide bonds, thereby polymerizing the amino acids delivered by tRNAs into a polypeptide chain. The nascent polypeptides leave the ribosome through a tunnel in the LSU and interact with protein factors that function in enzymatic processing, targeting, and the membrane insertion of nascent chains at the exit of the ribosomal tunnel. As part of the LSU, it is probably required for its formation and the maturation of rRNAs. Plays a role in bone development. The protein is Large ribosomal subunit protein eL13 (Rpl13) of Rattus norvegicus (Rat).